The chain runs to 216 residues: Octanoyltransferase (216 aa).

Residues 32 to 211 (QEASEMLWFL…RFPYFLEALQ (180 aa)) form the BPL/LPL catalytic domain. Substrate is bound by residues 71 to 78 (RGGRYTYH), 142 to 144 (AIG), and 155 to 157 (GFS). The Acyl-thioester intermediate role is filled by C173.

The protein belongs to the LipB family.

It localises to the cytoplasm. It carries out the reaction octanoyl-[ACP] + L-lysyl-[protein] = N(6)-octanoyl-L-lysyl-[protein] + holo-[ACP] + H(+). It participates in protein modification; protein lipoylation via endogenous pathway; protein N(6)-(lipoyl)lysine from octanoyl-[acyl-carrier-protein]: step 1/2. Functionally, catalyzes the transfer of endogenously produced octanoic acid from octanoyl-acyl-carrier-protein onto the lipoyl domains of lipoate-dependent enzymes. Lipoyl-ACP can also act as a substrate although octanoyl-ACP is likely to be the physiological substrate. In Zymomonas mobilis subsp. mobilis (strain ATCC 31821 / ZM4 / CP4), this protein is Octanoyltransferase.